We begin with the raw amino-acid sequence, 714 residues long: EtfAB:quinone oxidoreductase (714 aa).

Helical transmembrane passes span 25–45 (YEWL…FGFW), 87–107 (AGWM…AAGI), 125–145 (IGFS…VMVL), 164–184 (DGWI…IEGL), 207–227 (PFGW…MLMW), and 236–256 (MAIA…HIFA). 2 consecutive 4Fe-4S ferredoxin-type domains span residues 293–324 (WKDL…LNPK) and 375–405 (YDVV…HIPK). [4Fe-4S] cluster-binding residues include Cys302, Cys305, Cys308, Cys312, Cys386, Cys389, Cys392, and Cys396.

Might constitute a membrane-associated complex with EtfA (Swol_0697), EtfB (Swol_0696), and the butyryl-CoA dehydrogenase Swol_1933 and/or Swol_2052. The cofactor is [4Fe-4S] cluster.

Its subcellular location is the cell membrane. Its pathway is lipid metabolism; butanoate metabolism. In terms of biological role, oxidoreductase involved in syntrophic growth of S.wolfei with butyrate. Is presumed to link the electron flow from butyryl-CoA dehydrogenases to the membrane, in conjunction with the electron transfer flavoprotein EtfAB. May transfer electrons to the menaquinone pool of the membrane. The chain is EtfAB:quinone oxidoreductase from Syntrophomonas wolfei subsp. wolfei (strain DSM 2245B / Goettingen).